We begin with the raw amino-acid sequence, 553 residues long: CTP synthase (553 aa).

Positions methionine 1 to leucine 270 are amidoligase domain. Serine 13 serves as a coordination point for CTP. Position 13 (serine 13) interacts with UTP. Residues serine 14 to isoleucine 19 and aspartate 71 each bind ATP. 2 residues coordinate Mg(2+): aspartate 71 and glutamate 144. Residues aspartate 151 to glutamate 153, lysine 191 to glutamine 196, and lysine 227 each bind CTP. Residues lysine 191–glutamine 196 and lysine 227 contribute to the UTP site. In terms of domain architecture, Glutamine amidotransferase type-1 spans threonine 295–threonine 547. Glycine 356 is a binding site for L-glutamine. Cysteine 383 acts as the Nucleophile; for glutamine hydrolysis in catalysis. L-glutamine is bound by residues leucine 384–glutamine 387, glutamate 407, and arginine 473. Residues histidine 520 and glutamate 522 contribute to the active site.

This sequence belongs to the CTP synthase family. In terms of assembly, homotetramer.

The enzyme catalyses UTP + L-glutamine + ATP + H2O = CTP + L-glutamate + ADP + phosphate + 2 H(+). The catalysed reaction is L-glutamine + H2O = L-glutamate + NH4(+). It carries out the reaction UTP + NH4(+) + ATP = CTP + ADP + phosphate + 2 H(+). The protein operates within pyrimidine metabolism; CTP biosynthesis via de novo pathway; CTP from UDP: step 2/2. Its activity is regulated as follows. Allosterically activated by GTP, when glutamine is the substrate; GTP has no effect on the reaction when ammonia is the substrate. The allosteric effector GTP functions by stabilizing the protein conformation that binds the tetrahedral intermediate(s) formed during glutamine hydrolysis. Inhibited by the product CTP, via allosteric rather than competitive inhibition. In terms of biological role, catalyzes the ATP-dependent amination of UTP to CTP with either L-glutamine or ammonia as the source of nitrogen. Regulates intracellular CTP levels through interactions with the four ribonucleotide triphosphates. This Burkholderia mallei (strain NCTC 10229) protein is CTP synthase.